Consider the following 129-residue polypeptide: Histone H2A.J (129 aa).

The interval 1–22 (MSGRGKQGGKVRAKAKSRSSRA) is disordered. Residue Ser-2 is modified to N-acetylserine. Ser-2 is subject to Phosphoserine. The residue at position 6 (Lys-6) is an N6-acetyllysine. Residues 7–19 (QGGKVRAKAKSRS) are compositionally biased toward basic residues. At Lys-10 the chain carries N6-lactoyllysine; alternate. Glycyl lysine isopeptide (Lys-Gly) (interchain with G-Cter in ubiquitin) cross-links involve residues Lys-14 and Lys-16. Position 105 is an N5-methylglutamine (Gln-105). Residue Lys-120 forms a Glycyl lysine isopeptide (Lys-Gly) (interchain with G-Cter in ubiquitin) linkage.

Belongs to the histone H2A family. As to quaternary structure, the nucleosome is a histone octamer containing two molecules each of H2A, H2B, H3 and H4 assembled in one H3-H4 heterotetramer and two H2A-H2B heterodimers. The octamer wraps approximately 147 bp of DNA. In terms of processing, monoubiquitination of Lys-120 (H2AXK119ub) gives a specific tag for epigenetic transcriptional repression. Following DNA double-strand breaks (DSBs), it is ubiquitinated through 'Lys-63' linkage of ubiquitin moieties. Post-translationally, phosphorylation on Ser-2 is enhanced during mitosis. Phosphorylation on Ser-2 directly represses transcription.

It localises to the nucleus. The protein localises to the chromosome. Its function is as follows. Core component of nucleosome. Nucleosomes wrap and compact DNA into chromatin, limiting DNA accessibility to the cellular machineries which require DNA as a template. Histones thereby play a central role in transcription regulation, DNA repair, DNA replication and chromosomal stability. DNA accessibility is regulated via a complex set of post-translational modifications of histones, also called histone code, and nucleosome remodeling. This Gallus gallus (Chicken) protein is Histone H2A.J (H2A-IX).